A 164-amino-acid chain; its full sequence is Pleckstrin homology domain-containing family J member 1 (164 aa).

The PH domain maps to P15 to Y108.

The chain is Pleckstrin homology domain-containing family J member 1 (Plekhj1) from Mus musculus (Mouse).